Here is a 331-residue protein sequence, read N- to C-terminus: Ribosomal RNA small subunit methyltransferase H (331 aa).

S-adenosyl-L-methionine-binding positions include 38–40 (GGY), Asp-56, Phe-83, Asp-100, and Gln-107. Residues 289-331 (AELAENPRARSARLRVGVRTDAPAGKVDPQALGTPLIPKKGRR) form a disordered region.

Belongs to the methyltransferase superfamily. RsmH family.

It localises to the cytoplasm. It carries out the reaction cytidine(1402) in 16S rRNA + S-adenosyl-L-methionine = N(4)-methylcytidine(1402) in 16S rRNA + S-adenosyl-L-homocysteine + H(+). Functionally, specifically methylates the N4 position of cytidine in position 1402 (C1402) of 16S rRNA. This chain is Ribosomal RNA small subunit methyltransferase H, found in Cereibacter sphaeroides (strain ATCC 17029 / ATH 2.4.9) (Rhodobacter sphaeroides).